The primary structure comprises 186 residues: T-cell receptor-associated transmembrane adapter 1 (186 aa).

At 1 to 7 (MSGISGC) the chain is on the extracellular side. Residues 8 to 28 (PFFLWGLLALLGLALVISLIF) traverse the membrane as a helical; Signal-anchor for type III membrane protein segment. At 29-186 (NISHYVEKQR…LIRAKREPIN (158 aa)) the chain is on the cytoplasmic side. Serine 46 bears the Phosphoserine mark. Tyrosine 79 is subject to Phosphotyrosine. An interaction with PIK3R1 region spans residues 79 to 82 (YEQM). Residues 116–140 (SVKGKRRKPRKQNTHFSDKDGDEQL) form a disordered region. The span at 118-128 (KGKRRKPRKQN) shows a compositional bias: basic residues. Residues 131-140 (FSDKDGDEQL) are compositionally biased toward basic and acidic residues.

In terms of assembly, homodimer; disulfide-linked. Interacts with CD3Z. When phosphorylated, interacts with PIK3R1. Phosphorylated on tyrosines by LCK or FYN upon TCR activation. In terms of tissue distribution, strongly expressed in thymus, and to a lesser extent in spleen, lymph node and peripheral blood lymphocytes. Present in T-cells and NK cells, but not B-cells (at protein level).

It localises to the cell membrane. In terms of biological role, stabilizes the TCR (T-cell antigen receptor)/CD3 complex at the surface of T-cells. This Homo sapiens (Human) protein is T-cell receptor-associated transmembrane adapter 1 (TRAT1).